The chain runs to 245 residues: Large ribosomal subunit protein uL3 (245 aa).

Residue Gln152 is modified to N5-methylglutamine. Residues 224–245 form a disordered region; it reads RSKAVQAEAAAPAEAAAPEGDN. Positions 230–245 are enriched in low complexity; sequence AEAAAPAEAAAPEGDN.

This sequence belongs to the universal ribosomal protein uL3 family. Part of the 50S ribosomal subunit. Forms a cluster with proteins L14 and L19. Methylated by PrmB.

Functionally, one of the primary rRNA binding proteins, it binds directly near the 3'-end of the 23S rRNA, where it nucleates assembly of the 50S subunit. The polypeptide is Large ribosomal subunit protein uL3 (Paracoccus denitrificans (strain Pd 1222)).